Consider the following 116-residue polypeptide: uncharacterized protein (116 aa).

An N-terminal signal peptide occupies residues 1 to 21 (MAPSTAMLIMGLLKLPRLRLA).

This is an uncharacterized protein from Saccharomyces cerevisiae (strain ATCC 204508 / S288c) (Baker's yeast).